The following is a 155-amino-acid chain: Small ribosomal subunit protein bS16 (155 aa).

Residues 113-155 (ADGAPTGEAIQQKKKKAPKKAEAAEAEAPAEEPAAESADAASE) are disordered. A compositionally biased stretch (acidic residues) spans 136-146 (AEAEAPAEEPA).

Belongs to the bacterial ribosomal protein bS16 family.

This chain is Small ribosomal subunit protein bS16, found in Mycobacteroides abscessus (strain ATCC 19977 / DSM 44196 / CCUG 20993 / CIP 104536 / JCM 13569 / NCTC 13031 / TMC 1543 / L948) (Mycobacterium abscessus).